The primary structure comprises 526 residues: Peptide chain release factor 3 (526 aa).

In terms of domain architecture, tr-type G spans 8-277; that stretch reads NKRRTFAIIS…GLTEWAPKPQ (270 aa). GTP-binding positions include 17–24, 85–89, and 139–142; these read SHPDAGKT, DTPGH, and NKLD.

Belongs to the TRAFAC class translation factor GTPase superfamily. Classic translation factor GTPase family. PrfC subfamily.

Its subcellular location is the cytoplasm. Increases the formation of ribosomal termination complexes and stimulates activities of RF-1 and RF-2. It binds guanine nucleotides and has strong preference for UGA stop codons. It may interact directly with the ribosome. The stimulation of RF-1 and RF-2 is significantly reduced by GTP and GDP, but not by GMP. The sequence is that of Peptide chain release factor 3 from Actinobacillus pleuropneumoniae serotype 3 (strain JL03).